The primary structure comprises 285 residues: UPF0014 membrane protein STAR2 (285 aa).

A run of 7 helical transmembrane segments spans residues 30-50 (FLVGMLKPVAATAVVAMAVAL), 64-84 (YAMARAFLQLSVIGFVLQFIF), 88-108 (SAAWILLAYLFMVTVAGYTAG), 119-139 (HIAAVSILAGTSVTMALLVAL), 148-168 (YIIPVAGMMVGNAMTVTGVTM), 203-225 (SLVIALSPVIDNAKTVGLIALPG), and 240-262 (AIQLQIVVMNMLMGASTVSSILS).

Belongs to the UPF0014 family. Interacts with STAR2. In terms of tissue distribution, expressed in roots.

The protein localises to the membrane. In terms of biological role, associates with STAR2 to form a functional transmembrane ABC transporter required for detoxification of aluminum (Al) in roots. Can specifically transport UDP-glucose. The polypeptide is UPF0014 membrane protein STAR2 (Oryza sativa subsp. japonica (Rice)).